We begin with the raw amino-acid sequence, 358 residues long: Dihydroorotate dehydrogenase (quinone) (358 aa).

FMN-binding positions include 61-65 (AGFDK) and Gly85. Residue Lys65 coordinates substrate. 110-114 (NRFGL) serves as a coordination point for substrate. 2 residues coordinate FMN: Asn139 and Asn170. Asn170 contacts substrate. Ser173 functions as the Nucleophile in the catalytic mechanism. Asn175 is a binding site for substrate. 2 residues coordinate FMN: Lys211 and Ser239. 240–241 (NT) is a substrate binding site. Residues Gly263, Gly292, and 313–314 (YS) contribute to the FMN site.

It belongs to the dihydroorotate dehydrogenase family. Type 2 subfamily. As to quaternary structure, monomer. The cofactor is FMN.

The protein localises to the cell membrane. The enzyme catalyses (S)-dihydroorotate + a quinone = orotate + a quinol. Its pathway is pyrimidine metabolism; UMP biosynthesis via de novo pathway; orotate from (S)-dihydroorotate (quinone route): step 1/1. Its function is as follows. Catalyzes the conversion of dihydroorotate to orotate with quinone as electron acceptor. This Methylorubrum extorquens (strain CM4 / NCIMB 13688) (Methylobacterium extorquens) protein is Dihydroorotate dehydrogenase (quinone).